Consider the following 214-residue polypeptide: Large ribosomal subunit protein uL1 (214 aa).

This sequence belongs to the universal ribosomal protein uL1 family. Part of the 50S ribosomal subunit.

Functionally, binds directly to 23S rRNA. Probably involved in E site tRNA release. Its function is as follows. Protein L1 is also a translational repressor protein, it controls the translation of its operon by binding to its mRNA. This is Large ribosomal subunit protein uL1 from Methanopyrus kandleri (strain AV19 / DSM 6324 / JCM 9639 / NBRC 100938).